A 345-amino-acid polypeptide reads, in one-letter code: Probable 1-aminocyclopropane-1-carboxylate deaminase (345 aa).

N6-(pyridoxal phosphate)lysine is present on K58. S85 acts as the Nucleophile in catalysis.

This sequence belongs to the ACC deaminase/D-cysteine desulfhydrase family. It depends on pyridoxal 5'-phosphate as a cofactor.

The catalysed reaction is 1-aminocyclopropane-1-carboxylate + H2O = 2-oxobutanoate + NH4(+). Catalyzes a cyclopropane ring-opening reaction, the irreversible conversion of 1-aminocyclopropane-1-carboxylate (ACC) to ammonia and alpha-ketobutyrate. The chain is Probable 1-aminocyclopropane-1-carboxylate deaminase from Cryptococcus neoformans var. neoformans serotype D (strain JEC21 / ATCC MYA-565) (Filobasidiella neoformans).